A 284-amino-acid polypeptide reads, in one-letter code: MEMO1 family protein Saci_0089 (284 aa).

The protein belongs to the MEMO1 family.

The chain is MEMO1 family protein Saci_0089 from Sulfolobus acidocaldarius (strain ATCC 33909 / DSM 639 / JCM 8929 / NBRC 15157 / NCIMB 11770).